The sequence spans 347 residues: Chlorophyll a/b light-harvesting protein PcbB (347 aa).

6 helical membrane passes run 25 to 45, 64 to 84, 91 to 111, 206 to 226, 247 to 267, and 308 to 328; these read GLWLAAHVAQASFIVLWAGAI, LILIPHLAALGIGVGAGGVVV, AIGAVHLISSFVFAFGAIFHV, LASGHAFIGVVLLSGGVWHIT, LSSALAGLSMLGFAAAYFSAV, and LCNVHFYLAFFVLQGHLWHAI.

It belongs to the PsbB/PsbC family. IsiA/Pcb subfamily. The antenna complex consists of chlorophylls (a and b) and chlorophyll a/b binding proteins. Chlorophyll a serves as cofactor. Chlorophyll b is required as a cofactor.

The protein localises to the cellular thylakoid membrane. Its function is as follows. The antenna complex functions as a light receptor, it captures and delivers excitation energy to photosystems II and I. The Prochlorales pcb genes are not related to higher plant LHCs. The polypeptide is Chlorophyll a/b light-harvesting protein PcbB (pcbB) (Prochlorothrix hollandica).